The primary structure comprises 362 residues: Phosphoserine aminotransferase (362 aa).

2 residues coordinate L-glutamate: serine 9 and arginine 42. Residues 76-77 (GR), tryptophan 102, threonine 153, aspartate 174, and glutamine 197 contribute to the pyridoxal 5'-phosphate site. Lysine 198 is modified (N6-(pyridoxal phosphate)lysine). 239–240 (NT) is a binding site for pyridoxal 5'-phosphate.

This sequence belongs to the class-V pyridoxal-phosphate-dependent aminotransferase family. SerC subfamily. In terms of assembly, homodimer. It depends on pyridoxal 5'-phosphate as a cofactor.

It localises to the cytoplasm. The enzyme catalyses O-phospho-L-serine + 2-oxoglutarate = 3-phosphooxypyruvate + L-glutamate. The catalysed reaction is 4-(phosphooxy)-L-threonine + 2-oxoglutarate = (R)-3-hydroxy-2-oxo-4-phosphooxybutanoate + L-glutamate. It participates in amino-acid biosynthesis; L-serine biosynthesis; L-serine from 3-phospho-D-glycerate: step 2/3. Its pathway is cofactor biosynthesis; pyridoxine 5'-phosphate biosynthesis; pyridoxine 5'-phosphate from D-erythrose 4-phosphate: step 3/5. In terms of biological role, catalyzes the reversible conversion of 3-phosphohydroxypyruvate to phosphoserine and of 3-hydroxy-2-oxo-4-phosphonooxybutanoate to phosphohydroxythreonine. The polypeptide is Phosphoserine aminotransferase (Escherichia coli O139:H28 (strain E24377A / ETEC)).